The chain runs to 87 residues: uncharacterized protein (87 aa).

To A.fulgidus AF_1348 and AF_1363.

This is an uncharacterized protein from Archaeoglobus fulgidus (strain ATCC 49558 / DSM 4304 / JCM 9628 / NBRC 100126 / VC-16).